We begin with the raw amino-acid sequence, 520 residues long: Peptide chain release factor 3 (520 aa).

Residues 8–277 (ESRKTFAIIS…HAPMPNARQT (270 aa)) form the tr-type G domain. Residues 17 to 24 (SHPDAGKT), 85 to 89 (DTPGH), and 139 to 142 (NKLD) each bind GTP.

It belongs to the TRAFAC class translation factor GTPase superfamily. Classic translation factor GTPase family. PrfC subfamily.

It localises to the cytoplasm. In terms of biological role, increases the formation of ribosomal termination complexes and stimulates activities of RF-1 and RF-2. It binds guanine nucleotides and has strong preference for UGA stop codons. It may interact directly with the ribosome. The stimulation of RF-1 and RF-2 is significantly reduced by GTP and GDP, but not by GMP. The chain is Peptide chain release factor 3 from Staphylococcus epidermidis (strain ATCC 35984 / DSM 28319 / BCRC 17069 / CCUG 31568 / BM 3577 / RP62A).